Here is a 205-residue protein sequence, read N- to C-terminus: Large ribosomal subunit protein uL4 (205 aa).

The protein belongs to the universal ribosomal protein uL4 family. Part of the 50S ribosomal subunit.

Its function is as follows. One of the primary rRNA binding proteins, this protein initially binds near the 5'-end of the 23S rRNA. It is important during the early stages of 50S assembly. It makes multiple contacts with different domains of the 23S rRNA in the assembled 50S subunit and ribosome. In terms of biological role, forms part of the polypeptide exit tunnel. The sequence is that of Large ribosomal subunit protein uL4 from Ruegeria sp. (strain TM1040) (Silicibacter sp.).